The following is a 107-amino-acid chain: Nucleoid-associated protein PPA0205 (107 aa).

The protein belongs to the YbaB/EbfC family. Homodimer.

It is found in the cytoplasm. It localises to the nucleoid. Binds to DNA and alters its conformation. May be involved in regulation of gene expression, nucleoid organization and DNA protection. The chain is Nucleoid-associated protein PPA0205 from Cutibacterium acnes (strain DSM 16379 / KPA171202) (Propionibacterium acnes).